A 517-amino-acid chain; its full sequence is MANINLDAFDKIIALDFGSQYNQLITRRLRDFGIYSELLSHKLTADEIKEINPKGIIFSGGPNSVYDPNAFKVDPEIFKLGIPILGICYGMQLMSYDLGGKVEKADNSEYGRADIEVLDDEAVLLKGLPKKQYVWMSHGDLVTQAPAGFEVTATSKNCPIASIADNDRKFYGVQFHPEVRNSEYGLDILRRFAFDVCGAKANWTMDDFIDMQIDEIRKEVGDKKVILGLSGGVDSSVTAVLIHKAIGDQLTCIFVDHGLLRKNEADQVMDALSRDLGVNIIKVDAADRFLGKLEGVTDPEQKRKIIGKEFIEVFNEEAKKIKDADFLAQGTLYTDVIESGTDTAQTIKSHHNVGGLPKKLGFKLIEPLRKLFKDETRELGEKLGIPHELVWRQPFPGPGLGIRVIGEITPEKLEIVRESDAILREEIKKAGLDEEIWQYFTVLPGIRSVGVMGDGRTYDYAVAIRAVTSIDGMTADFAKIPWDILQKISVRIVNEVDHVNRILYDVTSKPPSTIEYE.

In terms of domain architecture, Glutamine amidotransferase type-1 spans 11–202 (KIIALDFGSQ…AFDVCGAKAN (192 aa)). The Nucleophile role is filled by C88. Active-site residues include H176 and E178. The 190-residue stretch at 203–392 (WTMDDFIDMQ…LGIPHELVWR (190 aa)) folds into the GMPS ATP-PPase domain. ATP is bound at residue 230 to 236 (SGGVDSS).

As to quaternary structure, homodimer.

It catalyses the reaction XMP + L-glutamine + ATP + H2O = GMP + L-glutamate + AMP + diphosphate + 2 H(+). Its pathway is purine metabolism; GMP biosynthesis; GMP from XMP (L-Gln route): step 1/1. Catalyzes the synthesis of GMP from XMP. The protein is GMP synthase [glutamine-hydrolyzing] of Limosilactobacillus reuteri (strain DSM 20016) (Lactobacillus reuteri).